The sequence spans 62 residues: Andropin (62 aa).

An N-terminal signal peptide occupies residues 1-22 (MKYFSVLVVLTLILAIVDQSDA).

The protein belongs to the andropin family. Ejaculatory duct of adult males.

The protein localises to the secreted. Functionally, male-specific peptide with moderate activity against Gram-positive bacteria. This is Andropin (Anp) from Drosophila teissieri (Fruit fly).